A 72-amino-acid polypeptide reads, in one-letter code: PI-stichotoxin-Hcr2k (72 aa).

The signal sequence occupies residues Gly1 to Gly9. A propeptide spanning residues Phe10–Gln16 is cleaved from the precursor. Residues Cys20–Cys70 form the BPTI/Kunitz inhibitor domain. 3 disulfide bridges follow: Cys20/Cys70, Cys29/Cys53, and Cys45/Cys66.

It belongs to the venom Kunitz-type family. Sea anemone type 2 potassium channel toxin subfamily.

It localises to the nematocyst. It is found in the secreted. Serine protease inhibitor that also shows protective effect in a cytotoxicity model. It inhibits the serine protease trypsin (Ki=630 nM). It significantly increases neuroblastoma cell viability in an in vitro neurotoxicity model, being a consequence of an effective decrease of reactive oxygen species (ROS) level in the cells. It also seems to protect cells by inhibiting ATP-induced purinoceptor (P2RX7) activation. The protein is PI-stichotoxin-Hcr2k of Radianthus crispa (Leathery sea anemone).